Here is a 54-residue protein sequence, read N- to C-terminus: Ductus ejaculatorius peptide 99B (54 aa).

Positions 1-21 (MKTPLFLLLVVLASLLGLALS) are cleaved as a signal peptide. Q22 carries the post-translational modification Pyrrolidone carboxylic acid. The N-linked (GlcNAc...) asparagine glycan is linked to N25. C40 and C52 are disulfide-bonded. The propeptide occupies 53–54 (RK).

To paragonial peptide B. As to expression, ductus ejaculatorius.

Its subcellular location is the secreted. Functionally, induces post-mating responses; increased oviposition and reduced receptivity. The polypeptide is Ductus ejaculatorius peptide 99B (Dup99B) (Drosophila melanogaster (Fruit fly)).